Consider the following 83-residue polypeptide: Small ribosomal subunit protein eS21 (83 aa).

The protein belongs to the eukaryotic ribosomal protein eS21 family. As to quaternary structure, component of the 40S small ribosomal subunit.

The protein resides in the cytoplasm. It localises to the cytosol. The protein localises to the rough endoplasmic reticulum. This chain is Small ribosomal subunit protein eS21 (RpS21), found in Biphyllus lunatus (Beetle).